The sequence spans 362 residues: Aspartate-semialdehyde dehydrogenase (362 aa).

8 residues coordinate NADP(+): threonine 15, glycine 16, alanine 17, valine 18, serine 40, serine 43, leucine 87, and aspartate 88. The active-site Acyl-thioester intermediate is cysteine 154. An NADP(+)-binding site is contributed by glycine 186. The active-site Proton acceptor is histidine 251. Residue asparagine 340 coordinates NADP(+).

The protein belongs to the aspartate-semialdehyde dehydrogenase family. In terms of assembly, homotetramer; dimer of dimers.

It localises to the cytoplasm. The protein localises to the cytosol. The protein resides in the nucleus. It catalyses the reaction L-aspartate 4-semialdehyde + phosphate + NADP(+) = 4-phospho-L-aspartate + NADPH + H(+). Its pathway is amino-acid biosynthesis; L-methionine biosynthesis via de novo pathway; L-homoserine from L-aspartate: step 2/3. It participates in amino-acid biosynthesis; L-threonine biosynthesis; L-threonine from L-aspartate: step 2/5. Catalyzes the NADPH-dependent formation of L-aspartate 4-semialdehyde (L-ASA) by the reductive dephosphorylation of 4-phospho-L-aspartate. Mediates the second step in the biosynthesis of amino acids that derive from aspartate (the aspartate family of amino acids), including methioinine and threonine, the latter of which is a precursor to isoleucine. In Trichophyton rubrum (strain ATCC MYA-4607 / CBS 118892) (Athlete's foot fungus), this protein is Aspartate-semialdehyde dehydrogenase.